The primary structure comprises 429 residues: Citrate synthase, chromosomal (429 aa).

Catalysis depends on residues His-306 and Asp-364.

This sequence belongs to the citrate synthase family.

The enzyme catalyses oxaloacetate + acetyl-CoA + H2O = citrate + CoA + H(+). It participates in carbohydrate metabolism; tricarboxylic acid cycle; isocitrate from oxaloacetate: step 1/2. This Rhizobium tropici protein is Citrate synthase, chromosomal (ccsA).